The sequence spans 202 residues: Putative transmembrane protein ORF202 (202 aa).

The next 5 helical transmembrane spans lie at alanine 13 to isoleucine 33, valine 40 to glycine 60, tyrosine 87 to phenylalanine 107, tyrosine 156 to serine 176, and leucine 177 to alanine 197.

The protein localises to the host membrane. The sequence is that of Putative transmembrane protein ORF202 from Acidianus filamentous virus 2 (isolate Italy/Pozzuoli) (AFV-2).